The sequence spans 227 residues: UPF0758 protein LPC_1989 (227 aa).

The MPN domain occupies Gln102–Val225. His173, His175, and Asp186 together coordinate Zn(2+). The short motif at His173–Asp186 is the JAMM motif element.

This sequence belongs to the UPF0758 family.

The polypeptide is UPF0758 protein LPC_1989 (Legionella pneumophila (strain Corby)).